The chain runs to 571 residues: Glutamate--tRNA ligase (571 aa).

The 'HIGH' region motif lies at 110–120 (PNPNGPATLGS).

This sequence belongs to the class-I aminoacyl-tRNA synthetase family. Glutamate--tRNA ligase type 2 subfamily.

Its subcellular location is the cytoplasm. It carries out the reaction tRNA(Glu) + L-glutamate + ATP = L-glutamyl-tRNA(Glu) + AMP + diphosphate. Its function is as follows. Catalyzes the attachment of glutamate to tRNA(Glu) in a two-step reaction: glutamate is first activated by ATP to form Glu-AMP and then transferred to the acceptor end of tRNA(Glu). This chain is Glutamate--tRNA ligase, found in Methanosarcina barkeri (strain Fusaro / DSM 804).